The chain runs to 335 residues: Probable deoxyhypusine synthase (335 aa).

Lysine 307 (nucleophile) is an active-site residue.

The protein belongs to the deoxyhypusine synthase family. Requires NAD(+) as cofactor.

The catalysed reaction is [eIF5A protein]-L-lysine + spermidine = [eIF5A protein]-deoxyhypusine + propane-1,3-diamine. Its pathway is protein modification; eIF5A hypusination. Functionally, catalyzes the NAD-dependent oxidative cleavage of spermidine and the subsequent transfer of the butylamine moiety of spermidine to the epsilon-amino group of a specific lysine residue of the eIF-5A precursor protein to form the intermediate deoxyhypusine residue. The protein is Probable deoxyhypusine synthase (dys) of Pyrococcus abyssi (strain GE5 / Orsay).